Here is a 205-residue protein sequence, read N- to C-terminus: CASP-like protein 0U1 (205 aa).

Residues 1–38 are Cytoplasmic-facing; the sequence is MDDAPGASDEAREPLLKRVGASVEGTSLMNHRLMKNPK. The chain crosses the membrane as a helical span at residues 39–57; it reads FRALLVESLMALTTFSFMA. Residues 58-89 are Extracellular-facing; it reads KQTEGLAGPELSTLNDCGEAGCGFTKFYQFKG. The helical transmembrane segment at 90–110 threads the bilayer; sequence VVGVYAGFWAYTVILIAMYVI. Residues 111-124 lie on the Cytoplasmic side of the membrane; the sequence is RKAPPPGTEFASYA. The chain crosses the membrane as a helical span at residues 125-145; the sequence is LFTAAMATFVVMSITECASVV. Over 146–159 the chain is Extracellular; the sequence is LSSDYYVCKNADYS. Residues 160–180 form a helical membrane-spanning segment; it reads LVSLIFAAATIVLNCLTCAFA. The Cytoplasmic portion of the chain corresponds to 181–205; it reads WRQWGELKFVGLPKTLSALTETYPG.

Belongs to the Casparian strip membrane proteins (CASP) family. Homodimer and heterodimers.

It is found in the cell membrane. The chain is CASP-like protein 0U1 from Ostreococcus lucimarinus (strain CCE9901).